Consider the following 61-residue polypeptide: Large ribosomal subunit protein uL30 (61 aa).

It belongs to the universal ribosomal protein uL30 family. In terms of assembly, part of the 50S ribosomal subunit.

This is Large ribosomal subunit protein uL30 from Laribacter hongkongensis (strain HLHK9).